A 224-amino-acid polypeptide reads, in one-letter code: Ribonuclease T (224 aa).

The 175-residue stretch at 20-194 (VVIDVETAGF…YDTERTAELF (175 aa)) folds into the Exonuclease domain. Residues Asp-23, Glu-25, His-181, and Asp-186 each coordinate Mg(2+). His-181 serves as the catalytic Proton donor/acceptor.

This sequence belongs to the RNase T family. As to quaternary structure, homodimer. The cofactor is Mg(2+).

Functionally, trims short 3' overhangs of a variety of RNA species, leaving a one or two nucleotide 3' overhang. Responsible for the end-turnover of tRNA: specifically removes the terminal AMP residue from uncharged tRNA (tRNA-C-C-A). Also appears to be involved in tRNA biosynthesis. The chain is Ribonuclease T from Shewanella putrefaciens (strain CN-32 / ATCC BAA-453).